We begin with the raw amino-acid sequence, 329 residues long: Homeobox protein ceh-40 (329 aa).

The 184-residue stretch at 3–186 folds into the PBC domain; that stretch reads EASKSIMDLL…VIQLKKRYLD (184 aa). Residues 10 to 90 are PBC-A; sequence DLLSEVVKIT…EGVAGPDDSL (81 aa). The interval 93-186 is PBC-B; sequence IQEAAGTDQY…VIQLKKRYLD (94 aa). Residues 187 to 249 constitute a DNA-binding region (homeobox; TALE-type); that stretch reads ARRKRRNFSK…NKRIRYKKTM (63 aa). The tract at residues 248-275 is disordered; the sequence is TMAKNEDERRENRKPEDRPPPGAPGAPY. The span at 250 to 266 shows a compositional bias: basic and acidic residues; it reads AKNEDERRENRKPEDRP.

Belongs to the TALE/PBX homeobox family. Expressed in head dopaminergic neurons.

It is found in the nucleus. In terms of biological role, plays a role in regulating gene expression in dopaminergic neurons, acting redundantly with homeobox protein ceh-20 in head neurons. May activate dopamine pathway genes in concert with ETS domain-containing protein ast-1, and homeobox proteins ceh-43 and ceh-20. The protein is Homeobox protein ceh-40 (ceh-40) of Caenorhabditis elegans.